The sequence spans 454 residues: Septin-10 (454 aa).

The Septin-type G domain maps to 63–329 (QGFCFNILCV…ELYRRCKLEE (267 aa)). The interval 73–80 (GETGIGKS) is G1 motif. Residues 73–80 (GETGIGKS), Gly-128, 209–217 (KADTVSKTE), Gly-263, and Arg-278 each bind GTP. The G3 motif stretch occupies residues 125-128 (NTVG). A G4 motif region spans residues 208–211 (AKAD).

The protein belongs to the TRAFAC class TrmE-Era-EngA-EngB-Septin-like GTPase superfamily. Septin GTPase family. As to quaternary structure, septins polymerize into heterooligomeric protein complexes that form filaments, and can associate with cellular membranes, actin filaments and microtubules. GTPase activity is required for filament formation. Interacts with ADGB. Post-translationally, proteolytically cleaved in vitro in a calmodulin-dependent manner. In terms of tissue distribution, widely expressed. Abundantly expressed in heart and kidney, placenta, skeletal muscles, liver and lung, as well as various tumor cell lines.

Its subcellular location is the cytoplasm. The protein localises to the cytoskeleton. It localises to the cell projection. It is found in the cilium. The protein resides in the flagellum. In terms of biological role, filament-forming cytoskeletal GTPase. May play a role in cytokinesis (Potential). This chain is Septin-10, found in Homo sapiens (Human).